The primary structure comprises 235 residues: Ribosomal RNA small subunit methyltransferase G (235 aa).

S-adenosyl-L-methionine-binding positions include Gly-74, Phe-79, 97 to 99, 125 to 126, and Arg-144; these read EAT and AE.

Belongs to the methyltransferase superfamily. RNA methyltransferase RsmG family.

The protein localises to the cytoplasm. Its function is as follows. Specifically methylates the N7 position of a guanine in 16S rRNA. This is Ribosomal RNA small subunit methyltransferase G from Dehalococcoides mccartyi (strain ATCC BAA-2100 / JCM 16839 / KCTC 5957 / BAV1).